The primary structure comprises 79 residues: Alpha-elapitoxin-Aa2e (79 aa).

Cystine bridges form between Cys-3-Cys-20, Cys-13-Cys-41, Cys-26-Cys-30, Cys-45-Cys-56, and Cys-57-Cys-62.

Belongs to the three-finger toxin family. Long-chain subfamily. Type II alpha-neurotoxin sub-subfamily. As to expression, expressed by the venom gland.

It localises to the secreted. Binds with high affinity to muscular (alpha-1/CHRNA1) and neuronal (alpha-7/CHRNA7) nicotinic acetylcholine receptor (nAChR) and inhibits acetylcholine from binding to the receptor, thereby impairing neuromuscular and neuronal transmission. Produces paralysis, clear dyspnea and lethality on mice. The polypeptide is Alpha-elapitoxin-Aa2e (Acanthophis antarcticus (Common death adder)).